A 61-amino-acid polypeptide reads, in one-letter code: Large ribosomal subunit protein eL37 (61 aa).

Residues Cys19, Cys22, Cys34, and Cys37 each contribute to the Zn(2+) site. The segment at 19-37 adopts a C4-type zinc-finger fold; the sequence is CRRCGRNAYNVSKHYCAAC.

Belongs to the eukaryotic ribosomal protein eL37 family. Zn(2+) is required as a cofactor.

In terms of biological role, binds to the 23S rRNA. The sequence is that of Large ribosomal subunit protein eL37 (rpl37e) from Saccharolobus solfataricus (strain ATCC 35092 / DSM 1617 / JCM 11322 / P2) (Sulfolobus solfataricus).